We begin with the raw amino-acid sequence, 381 residues long: Queuine tRNA-ribosyltransferase (381 aa).

Aspartate 96 serves as the catalytic Proton acceptor. Residues 96-100, aspartate 150, glutamine 193, and glycine 220 each bind substrate; that span reads DSGGF. Positions 251-257 are RNA binding; sequence GVGSPDS. The active-site Nucleophile is aspartate 270. Positions 275–279 are RNA binding; important for wobble base 34 recognition; that stretch reads TRIAR. Zn(2+) is bound by residues cysteine 308, cysteine 310, cysteine 313, and histidine 339.

This sequence belongs to the queuine tRNA-ribosyltransferase family. Homodimer. Within each dimer, one monomer is responsible for RNA recognition and catalysis, while the other monomer binds to the replacement base PreQ1. Requires Zn(2+) as cofactor.

The catalysed reaction is 7-aminomethyl-7-carbaguanine + guanosine(34) in tRNA = 7-aminomethyl-7-carbaguanosine(34) in tRNA + guanine. The protein operates within tRNA modification; tRNA-queuosine biosynthesis. Functionally, catalyzes the base-exchange of a guanine (G) residue with the queuine precursor 7-aminomethyl-7-deazaguanine (PreQ1) at position 34 (anticodon wobble position) in tRNAs with GU(N) anticodons (tRNA-Asp, -Asn, -His and -Tyr). Catalysis occurs through a double-displacement mechanism. The nucleophile active site attacks the C1' of nucleotide 34 to detach the guanine base from the RNA, forming a covalent enzyme-RNA intermediate. The proton acceptor active site deprotonates the incoming PreQ1, allowing a nucleophilic attack on the C1' of the ribose to form the product. After dissociation, two additional enzymatic reactions on the tRNA convert PreQ1 to queuine (Q), resulting in the hypermodified nucleoside queuosine (7-(((4,5-cis-dihydroxy-2-cyclopenten-1-yl)amino)methyl)-7-deazaguanosine). This Lysinibacillus sphaericus (strain C3-41) protein is Queuine tRNA-ribosyltransferase.